Reading from the N-terminus, the 202-residue chain is Holliday junction branch migration complex subunit RuvA (202 aa).

A domain I region spans residues 1–64 (MIGRLRGTLA…EDAQLLYGFA (64 aa)). Residues 65–143 (GKRERDFFRE…AWETSPAMFA (79 aa)) are domain II. A flexible linker region spans residues 144 to 154 (LVPNQPDGPAP). The tract at residues 154-202 (PVNTAENDAVSALISLGYKPQEASKAISAIKEKGLSSEDMIRRALKGMI) is domain III.

Belongs to the RuvA family. Homotetramer. Forms an RuvA(8)-RuvB(12)-Holliday junction (HJ) complex. HJ DNA is sandwiched between 2 RuvA tetramers; dsDNA enters through RuvA and exits via RuvB. An RuvB hexamer assembles on each DNA strand where it exits the tetramer. Each RuvB hexamer is contacted by two RuvA subunits (via domain III) on 2 adjacent RuvB subunits; this complex drives branch migration. In the full resolvosome a probable DNA-RuvA(4)-RuvB(12)-RuvC(2) complex forms which resolves the HJ.

Its subcellular location is the cytoplasm. Functionally, the RuvA-RuvB-RuvC complex processes Holliday junction (HJ) DNA during genetic recombination and DNA repair, while the RuvA-RuvB complex plays an important role in the rescue of blocked DNA replication forks via replication fork reversal (RFR). RuvA specifically binds to HJ cruciform DNA, conferring on it an open structure. The RuvB hexamer acts as an ATP-dependent pump, pulling dsDNA into and through the RuvAB complex. HJ branch migration allows RuvC to scan DNA until it finds its consensus sequence, where it cleaves and resolves the cruciform DNA. This chain is Holliday junction branch migration complex subunit RuvA, found in Pseudomonas fluorescens (strain Pf0-1).